Here is a 743-residue protein sequence, read N- to C-terminus: MGDSGSRRSTLVSRLPIFRRSISRKHDSLPSSPSSSNTVGVHSSSPSSTNSSSGSTGKRRSLFRTPSISFHHKKGSEPKQEPTNQNLSISNGAQPGQSSMQKLSLEEHTKARGRHSVGFSSSRNKKITRSLTEDFEREKEHSTNKNVFINCLSSGKSEGDDSGFTEEQTRRSVKQSTKKLLTKSFSSHYKLSKPVPQSQSISLVQQSEFSLEITQYQEREPVLVRGSPSCSVDVTERAGSSLQSPLLSADLTTAQTPSEFLALTEDSVSETDAFPKSGSMASHCDNLGHNDSTSQISPNPAAVTKTTRDLRGTVPCAIVSPGKYRLEGRCSTESNSLPETSAAYQKEVLLQITKLPVMNGSDSETHPSTDTREDHIVIQNGETMLATSSPRKFGFYEHHKAIAERVKGIHPISDSRIIPSSGDHHVLNKTSYGYDANPAKVLASSLSPYREGRFIERRLRSSSEGTAGSSRMILKPKDGNVEEVNSLRKQRASSSSSKMNSMDVLNNLGSCELDEDDLMLDLEFLEEQNLHPSVCREDSYHSVVSCAAVVLTPMEPTVEMKKREELKFREPSKQNLSLKLAKDIDQEARCSHIRGVPSSPSSDWPLPSVEENGGIDSLPFRLMLQDCTAVKTLLLKMKRVLQESADMSPASSTTSLPVSPLAEEPLPFKDIMKDECSMLKLQLKEKDELISQLQEELEKVQHLQKAFASRVDKSTQTELLGYDALWNPTCTEGLFKPVHNIST.

Disordered regions lie at residues 1–125 (MGDS…SRNK) and 156–175 (KSEG…SVKQ). Positions 29–56 (LPSSPSSSNTVGVHSSSPSSTNSSSGST) are enriched in low complexity. The span at 81–102 (EPTNQNLSISNGAQPGQSSMQK) shows a compositional bias: polar residues. A coiled-coil region spans residues 672–713 (MKDECSMLKLQLKEKDELISQLQEELEKVQHLQKAFASRVDK).

The protein belongs to the CCSER family.

The sequence is that of Serine-rich coiled-coil domain-containing protein 1 (CCSER1) from Bos taurus (Bovine).